Reading from the N-terminus, the 117-residue chain is Ig heavy chain V region MOO (117 aa).

Residues Glu1 to Ser116 form the Ig-like domain.

This Canis lupus familiaris (Dog) protein is Ig heavy chain V region MOO.